Consider the following 545-residue polypeptide: Esterase-5C (545 aa).

Residues 1–19 (MLAARLIILLSFYWLSASA) form the signal peptide. Residues Cys-84 and Cys-103 are joined by a disulfide bond. The N-linked (GlcNAc...) asparagine glycan is linked to Asn-113. Ser-207 serves as the catalytic Acyl-ester intermediate. A disulfide bridge links Cys-259 with Cys-271. Asn-421 is a glycosylation site (N-linked (GlcNAc...) asparagine). His-467 serves as the catalytic Charge relay system. Residue Asn-507 is glycosylated (N-linked (GlcNAc...) asparagine). A disulfide bridge links Cys-515 with Cys-536.

It belongs to the type-B carboxylesterase/lipase family.

The protein localises to the secreted. The catalysed reaction is a carboxylic ester + H2O = an alcohol + a carboxylate + H(+). The sequence is that of Esterase-5C (Est-5C) from Drosophila persimilis (Fruit fly).